Consider the following 701-residue polypeptide: 2-isopropylmalate synthase (701 aa).

The segment at 1 to 40 is disordered; sequence MTTSESPDAYTESFGAHTIVKPAGPPRVGQPSWNPQRASS. The span at 31–40 shows a compositional bias: polar residues; sequence PSWNPQRASS. The 275-residue stretch at 72–346 folds into the Pyruvate carboxyltransferase domain; the sequence is PLWCAVDLRD…DPQIDFSNID (275 aa). Mg(2+)-binding residues include Asp-81, His-285, His-287, and Asn-321. A regulatory domain region spans residues 491–701; sequence PVRPLERIRQ…VVSAVNRAAR (211 aa). The stretch at 575–593 is one VNTR1 repeat; sequence VTIASPAQPGEAGRHASDP. The interval 581–670 is disordered; it reads AQPGEAGRHA…EAGRHASDPV (90 aa). One copy of the VNTR2 repeat lies at 594–612; that stretch reads VTIASPAQPGEAGRHASDP. The stretch at 613-631 is one VNTR3 repeat; the sequence is VTIASPAQPGEAGRHASDP. The VNTR4 repeat unit spans residues 632–650; sequence VTIASPAQPGEAGRHASDP. The stretch at 651-669 is one VNTR5 repeat; that stretch reads VTIASPAQPGEAGRHASDP.

It belongs to the alpha-IPM synthase/homocitrate synthase family. LeuA type 2 subfamily. As to quaternary structure, homodimer. Requires Mg(2+) as cofactor.

Its subcellular location is the cytoplasm. The enzyme catalyses 3-methyl-2-oxobutanoate + acetyl-CoA + H2O = (2S)-2-isopropylmalate + CoA + H(+). It functions in the pathway amino-acid biosynthesis; L-leucine biosynthesis; L-leucine from 3-methyl-2-oxobutanoate: step 1/4. In terms of biological role, catalyzes the condensation of the acetyl group of acetyl-CoA with 3-methyl-2-oxobutanoate (2-ketoisovalerate) to form 3-carboxy-3-hydroxy-4-methylpentanoate (2-isopropylmalate). The sequence is that of 2-isopropylmalate synthase from Mycobacterium bovis (strain ATCC BAA-935 / AF2122/97).